The primary structure comprises 438 residues: MAKPVVAIVGRPNVGKSTLFNRLAGYRISIVEGEPNVTRDRIYADVNWLDRSFIIVDTGGIDPYDRDQIKNMVKYQAQMAIDEASLILFVVDGRNGLTATDEEVAAFLRKSNKKVILVVNKVDDFKNMEEDCWEFYTLGFDKLIPISAEHGKNTGDLLDEIVNMLPEKGPEDSDDDAIDVAIIGKPNVGKSSLVNYIVGQERVIVSDIPGTTRDAIDTLVEKNGHRYNLIDTAGLRKKSRVKEATEYYSALRTIKAIDRSDGVIMMIDALEGVTEQDKKIAGYAHEAGKAIVLAVNKWDLVEKDTHTMENYKEEIYYNLKFLQYAPVTFISALTGKRVQELLKLIEYVVDQNSRRVKTGLLNEVVQESIQLREPPTRKGKKLKIFYTTQVGIKPPTFVFFVNNPGLVHFAYQRYLENSLRDAFGFVGSPIRLKFKQKT.

2 consecutive EngA-type G domains span residues 4 to 169 and 178 to 353; these read PVVA…PEKG and IDVA…DQNS. GTP contacts are provided by residues 10–17, 57–61, 120–123, 184–191, 231–235, and 296–299; these read GRPNVGKS, DTGGI, NKVD, GKPNVGKS, DTAGL, and NKWD. The region spanning 354–438 is the KH-like domain; that stretch reads RRVKTGLLNE…PIRLKFKQKT (85 aa).

The protein belongs to the TRAFAC class TrmE-Era-EngA-EngB-Septin-like GTPase superfamily. EngA (Der) GTPase family. As to quaternary structure, associates with the 50S ribosomal subunit.

In terms of biological role, GTPase that plays an essential role in the late steps of ribosome biogenesis. In Halothermothrix orenii (strain H 168 / OCM 544 / DSM 9562), this protein is GTPase Der.